A 556-amino-acid polypeptide reads, in one-letter code: DNA ligase (556 aa).

ATP is bound at residue glutamate 245. Lysine 247 serves as the catalytic N6-AMP-lysine intermediate. Positions 252, 267, 296, 336, 408, and 414 each coordinate ATP.

Belongs to the ATP-dependent DNA ligase family. Requires Mg(2+) as cofactor.

It catalyses the reaction ATP + (deoxyribonucleotide)n-3'-hydroxyl + 5'-phospho-(deoxyribonucleotide)m = (deoxyribonucleotide)n+m + AMP + diphosphate.. DNA ligase that seals nicks in double-stranded DNA during DNA replication, DNA recombination and DNA repair. The sequence is that of DNA ligase from Methanosphaerula palustris (strain ATCC BAA-1556 / DSM 19958 / E1-9c).